The chain runs to 247 residues: NAD(P)H-quinone oxidoreductase subunit K (247 aa).

Residues Cys63, Cys64, Cys128, and Cys159 each coordinate [4Fe-4S] cluster.

This sequence belongs to the complex I 20 kDa subunit family. NDH-1 can be composed of about 15 different subunits; different subcomplexes with different compositions have been identified which probably have different functions. The cofactor is [4Fe-4S] cluster.

Its subcellular location is the cellular thylakoid membrane. It carries out the reaction a plastoquinone + NADH + (n+1) H(+)(in) = a plastoquinol + NAD(+) + n H(+)(out). The catalysed reaction is a plastoquinone + NADPH + (n+1) H(+)(in) = a plastoquinol + NADP(+) + n H(+)(out). NDH-1 shuttles electrons from an unknown electron donor, via FMN and iron-sulfur (Fe-S) centers, to quinones in the respiratory and/or the photosynthetic chain. The immediate electron acceptor for the enzyme in this species is believed to be plastoquinone. Couples the redox reaction to proton translocation, and thus conserves the redox energy in a proton gradient. Cyanobacterial NDH-1 also plays a role in inorganic carbon-concentration. The polypeptide is NAD(P)H-quinone oxidoreductase subunit K (Microcystis aeruginosa (strain NIES-843 / IAM M-2473)).